The primary structure comprises 202 residues: Glycerol-3-phosphate acyltransferase (202 aa).

Transmembrane regions (helical) follow at residues 2 to 22 (INLLFAVIAYLIGSVSFAVVV), 51 to 71 (KAAIFTLIGDALKGLAAVLLA), 80 to 100 (VDETGIALVALAVFLGHLFPL), 116 to 136 (ILFAIDPILGAGTLATWLIIA), 137 to 157 (FFFRYSSLAALISAIFAPFFY), and 158 to 178 (VLMNGVDIMAGAILVISVLLI).

Belongs to the PlsY family. In terms of assembly, probably interacts with PlsX.

It is found in the cell inner membrane. It carries out the reaction an acyl phosphate + sn-glycerol 3-phosphate = a 1-acyl-sn-glycero-3-phosphate + phosphate. It functions in the pathway lipid metabolism; phospholipid metabolism. Functionally, catalyzes the transfer of an acyl group from acyl-phosphate (acyl-PO(4)) to glycerol-3-phosphate (G3P) to form lysophosphatidic acid (LPA). This enzyme utilizes acyl-phosphate as fatty acyl donor, but not acyl-CoA or acyl-ACP. The chain is Glycerol-3-phosphate acyltransferase from Cupriavidus metallidurans (strain ATCC 43123 / DSM 2839 / NBRC 102507 / CH34) (Ralstonia metallidurans).